The sequence spans 525 residues: Peptide chain release factor 3 (525 aa).

The region spanning 11 to 279 (NNRRTFAIIS…AYLKYAPKPA (269 aa)) is the tr-type G domain. Residues 20–27 (SHPDAGKT), 88–92 (DTPGH), and 142–145 (NKLD) contribute to the GTP site.

Belongs to the TRAFAC class translation factor GTPase superfamily. Classic translation factor GTPase family. PrfC subfamily.

The protein resides in the cytoplasm. Increases the formation of ribosomal termination complexes and stimulates activities of RF-1 and RF-2. It binds guanine nucleotides and has strong preference for UGA stop codons. It may interact directly with the ribosome. The stimulation of RF-1 and RF-2 is significantly reduced by GTP and GDP, but not by GMP. This chain is Peptide chain release factor 3, found in Ligilactobacillus salivarius (strain UCC118) (Lactobacillus salivarius).